Reading from the N-terminus, the 124-residue chain is Quinol oxidase subunit 4 (124 aa).

3 consecutive transmembrane segments (helical) span residues 16 to 36, 44 to 64, and 78 to 98; these read IVGF…AVYT, LWII…MFMH, and TLFG…IFAA.

It belongs to the cytochrome c oxidase bacterial subunit 4 family.

It is found in the cell membrane. It carries out the reaction 2 a quinol + O2 = 2 a quinone + 2 H2O. Functionally, catalyzes quinol oxidation with the concomitant reduction of oxygen to water. Major component for energy conversion during vegetative growth. This is Quinol oxidase subunit 4 (qoxD) from Bacillus spizizenii (strain ATCC 23059 / NRRL B-14472 / W23) (Bacillus subtilis subsp. spizizenii).